The primary structure comprises 327 residues: GMP reductase (327 aa).

The active-site Thioimidate intermediate is Cys175. Ile204–Val227 is a binding site for NADP(+).

It belongs to the IMPDH/GMPR family. GuaC type 2 subfamily.

It carries out the reaction IMP + NH4(+) + NADP(+) = GMP + NADPH + 2 H(+). Its function is as follows. Catalyzes the irreversible NADPH-dependent deamination of GMP to IMP. It functions in the conversion of nucleobase, nucleoside and nucleotide derivatives of G to A nucleotides, and in maintaining the intracellular balance of A and G nucleotides. This Oceanobacillus iheyensis (strain DSM 14371 / CIP 107618 / JCM 11309 / KCTC 3954 / HTE831) protein is GMP reductase.